The sequence spans 341 residues: Phenylalanine--tRNA ligase alpha subunit (341 aa).

Glutamate 255 provides a ligand contact to Mg(2+).

Belongs to the class-II aminoacyl-tRNA synthetase family. Phe-tRNA synthetase alpha subunit type 1 subfamily. As to quaternary structure, tetramer of two alpha and two beta subunits. It depends on Mg(2+) as a cofactor.

It is found in the cytoplasm. It carries out the reaction tRNA(Phe) + L-phenylalanine + ATP = L-phenylalanyl-tRNA(Phe) + AMP + diphosphate + H(+). The chain is Phenylalanine--tRNA ligase alpha subunit from Natranaerobius thermophilus (strain ATCC BAA-1301 / DSM 18059 / JW/NM-WN-LF).